The chain runs to 339 residues: Ketol-acid reductoisomerase (NADP(+)) (339 aa).

Residues 1–182 (MRVYYDRDAD…GGGRSGIIET (182 aa)) enclose the KARI N-terminal Rossmann domain. NADP(+) contacts are provided by residues 24 to 27 (YGSQ), lysine 48, serine 51, threonine 53, and 83 to 86 (DELQ). Histidine 108 is an active-site residue. Glycine 134 lines the NADP(+) pocket. Positions 183-328 (NFREECETDL…AKLRGMMPWI (146 aa)) constitute a KARI C-terminal knotted domain. The Mg(2+) site is built by aspartate 191, glutamate 195, glutamate 227, and glutamate 231. Serine 252 serves as a coordination point for substrate.

The protein belongs to the ketol-acid reductoisomerase family. It depends on Mg(2+) as a cofactor.

It catalyses the reaction (2R)-2,3-dihydroxy-3-methylbutanoate + NADP(+) = (2S)-2-acetolactate + NADPH + H(+). The catalysed reaction is (2R,3R)-2,3-dihydroxy-3-methylpentanoate + NADP(+) = (S)-2-ethyl-2-hydroxy-3-oxobutanoate + NADPH + H(+). It participates in amino-acid biosynthesis; L-isoleucine biosynthesis; L-isoleucine from 2-oxobutanoate: step 2/4. It functions in the pathway amino-acid biosynthesis; L-valine biosynthesis; L-valine from pyruvate: step 2/4. Its function is as follows. Involved in the biosynthesis of branched-chain amino acids (BCAA). Catalyzes an alkyl-migration followed by a ketol-acid reduction of (S)-2-acetolactate (S2AL) to yield (R)-2,3-dihydroxy-isovalerate. In the isomerase reaction, S2AL is rearranged via a Mg-dependent methyl migration to produce 3-hydroxy-3-methyl-2-ketobutyrate (HMKB). In the reductase reaction, this 2-ketoacid undergoes a metal-dependent reduction by NADPH to yield (R)-2,3-dihydroxy-isovalerate. The polypeptide is Ketol-acid reductoisomerase (NADP(+)) (Rhizobium rhizogenes (strain K84 / ATCC BAA-868) (Agrobacterium radiobacter)).